Reading from the N-terminus, the 201-residue chain is NAD(P)H dehydrogenase (quinone) (201 aa).

Residues 4 to 192 form the Flavodoxin-like domain; the sequence is VLVLYYSSYG…TIARFQGQHI (189 aa). FMN contacts are provided by residues 10-15 and 80-82; these read SSYGHV and TRF. Tyrosine 12 contributes to the NAD(+) binding site. Tryptophan 100 lines the substrate pocket. FMN is bound by residues 115–121 and histidine 136; that span reads STASQHG.

The protein belongs to the WrbA family. It depends on FMN as a cofactor.

It carries out the reaction a quinone + NADH + H(+) = a quinol + NAD(+). The enzyme catalyses a quinone + NADPH + H(+) = a quinol + NADP(+). The polypeptide is NAD(P)H dehydrogenase (quinone) (Chromohalobacter salexigens (strain ATCC BAA-138 / DSM 3043 / CIP 106854 / NCIMB 13768 / 1H11)).